We begin with the raw amino-acid sequence, 121 residues long: MKLFMVLVASFAFAVALPSKKREETAENELTGDLQEAAQPMIYAVAFPEIRASCVIGWKQQGAKCERDCECCGVAATCITRSTNSLPGFCGYRQTPNVLGQGLLYTADTISNGLSAIFCAA.

The first 16 residues, 1-16 (MKLFMVLVASFAFAVA), serve as a signal peptide directing secretion. 4 cysteine pairs are disulfide-bonded: cysteine 54–cysteine 72, cysteine 65–cysteine 78, cysteine 69–cysteine 119, and cysteine 71–cysteine 90.

It belongs to the neurotoxin 03 (Tx2) family. 03 subfamily. Expressed by the venom gland.

It localises to the secreted. Functionally, ion channel inhibitor. The chain is U15-barytoxin-Tl1b from Trittame loki (Brush-footed trapdoor spider).